A 137-amino-acid polypeptide reads, in one-letter code: Putative nickel-responsive regulator (137 aa).

4 residues coordinate Ni(2+): His79, His90, His92, and Cys98.

The protein belongs to the transcriptional regulatory CopG/NikR family. The cofactor is Ni(2+).

Transcriptional regulator. In Campylobacter concisus (strain 13826), this protein is Putative nickel-responsive regulator.